The following is a 459-amino-acid chain: N(6)-adenosine-methyltransferase non-catalytic subunit METTL14 (459 aa).

The disordered stretch occupies residues Thr50–Asp73. 2 interaction with METTL3 regions span residues Arg135 to Asp136 and Ser237 to Gly238. The tract at residues Arg245 to Arg254 is positively charged region required for RNA-binding. Interaction with METTL3 stretches follow at residues Arg255–Asp258 and Lys278–His287. Positions Arg297 to Arg298 are positively charged region required for RNA-binding. The interval Asn308–Asp312 is interaction with METTL3. The tract at residues Ile392–Arg459 is disordered. Positions Gly409 to Ala423 are enriched in gly residues. The segment covering Arg425 to Gly443 has biased composition (basic and acidic residues). Gly residues predominate over residues Phe444–Arg453.

It belongs to the MT-A70-like family. As to quaternary structure, heterodimer; heterodimerizes with METTL3 to form an antiparallel heterodimer that constitutes an active methyltransferase. Component of the WMM complex, a N6-methyltransferase complex composed of a catalytic subcomplex, named MAC, and of an associated subcomplex, named MACOM. The MAC subcomplex is composed of METTL3 and METTL14.

Its subcellular location is the nucleus. Its function is as follows. The METTL3-METTL14 heterodimer forms a N6-methyltransferase complex that methylates adenosine residues at the N(6) position of some mRNAs and regulates the circadian clock, differentiation of embryonic stem cells and cortical neurogenesis. In the heterodimer formed with METTL3, METTL14 constitutes the RNA-binding scaffold that recognizes the substrate rather than the catalytic core. N6-methyladenosine (m6A), which takes place at the 5'-[AG]GAC-3' consensus sites of some mRNAs, plays a role in mRNA stability and processing. The protein is N(6)-adenosine-methyltransferase non-catalytic subunit METTL14 (METTL14) of Gallus gallus (Chicken).